The primary structure comprises 485 residues: Putative phosphoethanolamine transferase HI_1064 (485 aa).

4 helical membrane passes run 33 to 53 (ILPA…ILIG), 55 to 75 (GMFT…ILLL), 81 to 101 (SFYF…PTGL), and 125 to 145 (FLLQ…ILIF).

Belongs to the phosphoethanolamine transferase family.

The protein localises to the cell membrane. The polypeptide is Putative phosphoethanolamine transferase HI_1064 (Haemophilus influenzae (strain ATCC 51907 / DSM 11121 / KW20 / Rd)).